Reading from the N-terminus, the 340-residue chain is 4-hydroxy-3-methylbut-2-enyl diphosphate reductase (340 aa).

Cysteine 18 contacts [4Fe-4S] cluster. 2 residues coordinate (2E)-4-hydroxy-3-methylbut-2-enyl diphosphate: histidine 47 and histidine 83. Residues histidine 47 and histidine 83 each coordinate dimethylallyl diphosphate. Isopentenyl diphosphate-binding residues include histidine 47 and histidine 83. A [4Fe-4S] cluster-binding site is contributed by cysteine 105. Histidine 133 is a (2E)-4-hydroxy-3-methylbut-2-enyl diphosphate binding site. Histidine 133 is a binding site for dimethylallyl diphosphate. Histidine 133 serves as a coordination point for isopentenyl diphosphate. The Proton donor role is filled by glutamate 135. A (2E)-4-hydroxy-3-methylbut-2-enyl diphosphate-binding site is contributed by threonine 174. Cysteine 204 contributes to the [4Fe-4S] cluster binding site. Positions 232, 233, 234, and 277 each coordinate (2E)-4-hydroxy-3-methylbut-2-enyl diphosphate. 4 residues coordinate dimethylallyl diphosphate: serine 232, serine 233, asparagine 234, and serine 277. Isopentenyl diphosphate-binding residues include serine 232, serine 233, asparagine 234, and serine 277.

It belongs to the IspH family. The cofactor is [4Fe-4S] cluster.

It catalyses the reaction isopentenyl diphosphate + 2 oxidized [2Fe-2S]-[ferredoxin] + H2O = (2E)-4-hydroxy-3-methylbut-2-enyl diphosphate + 2 reduced [2Fe-2S]-[ferredoxin] + 2 H(+). It carries out the reaction dimethylallyl diphosphate + 2 oxidized [2Fe-2S]-[ferredoxin] + H2O = (2E)-4-hydroxy-3-methylbut-2-enyl diphosphate + 2 reduced [2Fe-2S]-[ferredoxin] + 2 H(+). Its pathway is isoprenoid biosynthesis; dimethylallyl diphosphate biosynthesis; dimethylallyl diphosphate from (2E)-4-hydroxy-3-methylbutenyl diphosphate: step 1/1. The protein operates within isoprenoid biosynthesis; isopentenyl diphosphate biosynthesis via DXP pathway; isopentenyl diphosphate from 1-deoxy-D-xylulose 5-phosphate: step 6/6. Catalyzes the conversion of 1-hydroxy-2-methyl-2-(E)-butenyl 4-diphosphate (HMBPP) into a mixture of isopentenyl diphosphate (IPP) and dimethylallyl diphosphate (DMAPP). Acts in the terminal step of the DOXP/MEP pathway for isoprenoid precursor biosynthesis. The protein is 4-hydroxy-3-methylbut-2-enyl diphosphate reductase of Bartonella quintana (strain Toulouse) (Rochalimaea quintana).